Reading from the N-terminus, the 286-residue chain is Polyamine aminopropyltransferase (286 aa).

A PABS domain is found at methionine 1–threonine 235. Glutamine 30 contributes to the S-methyl-5'-thioadenosine binding site. Residues histidine 61 and aspartate 85 each contribute to the spermidine site. Residues glutamate 105 and aspartate 137–glycine 138 each bind S-methyl-5'-thioadenosine. Aspartate 155 functions as the Proton acceptor in the catalytic mechanism. Aspartate 155–aspartate 158 serves as a coordination point for spermidine. Proline 162 lines the S-methyl-5'-thioadenosine pocket.

Belongs to the spermidine/spermine synthase family. Homodimer or homotetramer.

Its subcellular location is the cytoplasm. It catalyses the reaction S-adenosyl 3-(methylsulfanyl)propylamine + putrescine = S-methyl-5'-thioadenosine + spermidine + H(+). The protein operates within amine and polyamine biosynthesis; spermidine biosynthesis; spermidine from putrescine: step 1/1. Functionally, catalyzes the irreversible transfer of a propylamine group from the amino donor S-adenosylmethioninamine (decarboxy-AdoMet) to putrescine (1,4-diaminobutane) to yield spermidine. This chain is Polyamine aminopropyltransferase, found in Pseudomonas syringae pv. tomato (strain ATCC BAA-871 / DC3000).